A 320-amino-acid chain; its full sequence is Cytochrome f (320 aa).

An N-terminal signal peptide occupies residues 1 to 35; sequence MENKNTFSWVKEQMTRSISVSIMIYVITQTSISNA. 4 residues coordinate heme: Y36, C56, C59, and H60. A helical membrane pass occupies residues 286–306; that stretch reads VQGLLFFFASVILAQVFLVLK.

Belongs to the cytochrome f family. As to quaternary structure, the 4 large subunits of the cytochrome b6-f complex are cytochrome b6, subunit IV (17 kDa polypeptide, petD), cytochrome f and the Rieske protein, while the 4 small subunits are PetG, PetL, PetM and PetN. The complex functions as a dimer. Heme serves as cofactor.

It localises to the plastid. It is found in the chloroplast thylakoid membrane. Component of the cytochrome b6-f complex, which mediates electron transfer between photosystem II (PSII) and photosystem I (PSI), cyclic electron flow around PSI, and state transitions. This chain is Cytochrome f, found in Lolium perenne (Perennial ryegrass).